Here is a 617-residue protein sequence, read N- to C-terminus: Chitin elicitor receptor kinase 1 (617 aa).

The N-terminal stretch at 1 to 23 is a signal peptide; sequence MKLKISLIAPILLLFSFFFAVES. The Extracellular portion of the chain corresponds to 24–232; that stretch reads KCRTSCPLAL…KSSKQDGVGA (209 aa). 3 disulfides stabilise this stretch: C25–C93, C29–C155, and C91–C153. 3 N-linked (GlcNAc...) asparagine glycosylation sites follow: N40, N52, and N102. The LysM 1; degenerate domain occupies 46–74; the sequence is VINQNLNSSIAPYDQINFDPILRYNSNIK. A LysM 2; degenerate domain is found at 108-140; sequence RQEDTYERVAISNYANLTTMESLQARNPFPATN. 109-115 is a binding site for chitin; that stretch reads QEDTYER. N123 is a glycosylation site (N-linked (GlcNAc...) asparagine). 137–143 contributes to the chitin binding site; it reads PATNIPL. N-linked (GlcNAc...) asparagine glycosylation occurs at N152. Positions 168-211 constitute a LysM 3 domain; it reads VTYPLRPEDSLSSIARSSGVSADILQRYNPGVNFNSGNGIVYVP. A helical membrane pass occupies residues 233-253; sequence GVIAGIVIGVIVALLLILFIV. Over 254–617 the chain is Cytoplasmic; sequence YYAYRKNKSK…EDLVSLMSGR (364 aa). Residues S266, S268, and S274 each carry the phosphoserine modification. The 273-residue stretch at 322–594 folds into the Protein kinase domain; the sequence is FNLSFKIGQG…YIVVALSTLF (273 aa). Residues 328-336 and K349 each bind ATP; that span reads IGQGGFGAV. At Y390 the chain carries Phosphotyrosine. The Proton acceptor role is filled by D441. T479 and T519 each carry phosphothreonine.

Belongs to the protein kinase superfamily. Ser/Thr protein kinase family. Forms homodimers and homooligomers. Homodimerization is required to trigger plant defenses. Binds to chitin, chitosan and chito-oligomer oligosaccharide elicitors. Interaction with chitin octamer (NAG(8)) promotes homodimerization while shorter chitin oligomers inhibit homodimerization. Interacts with Pseudomonas syringae hopAB2/avrPtoB. Interacts (preferentially when unphosphorylated) with PBL27 at the plasma membrane. Binds to IOS1. In terms of processing, autophosphorylated. Autophosphorylation is induced by chitin and derivatives. Ubiquitinated and targeted to the proteasome by hopAB2/avrPtoB of Pseudomonas syringae pv. tomato DC3000. In terms of tissue distribution, expressed ubiquitously, with lowest expression in pollen.

Its subcellular location is the cell membrane. It catalyses the reaction L-seryl-[protein] + ATP = O-phospho-L-seryl-[protein] + ADP + H(+). The catalysed reaction is L-threonyl-[protein] + ATP = O-phospho-L-threonyl-[protein] + ADP + H(+). Activated by chitin-mediated homodimerization. In terms of biological role, lysin motif (LysM) receptor kinase that functions as a cell surface receptor in chitin elicitor (chitooligosaccharides) signaling leading to innate immunity toward both biotic and abiotic stresses (e.g. tolerance to salinity, heavy-metal stresses, and Botrytis cinerea infection). Recognizes microbe-derived N-acetylglucosamine (NAG)-containing ligands. Involved in the resistance to pathogenic fungi Alternaria brassicicola and Erysiphe cichoracearum, probably by sensing microbe-associated molecular patterns (MAMP) and pathogen-associated molecular patterns (PAMP). Plays an essential role in detecting peptidoglycans (e.g. PGNs) and restricting bacterial growth. Target of the bacterial type III effector E3-ligase protein hopAB2/avrPtoB of Pseudomonas syringae pv. tomato DC3000 that mediates ubiquitination and subsequent proteolysis, thus blocking all defense responses by suppressing PAMP-triggered immunity (PTI). Mediates chitin-induced phosphorylation of PBL27. The chain is Chitin elicitor receptor kinase 1 (CERK1) from Arabidopsis thaliana (Mouse-ear cress).